The chain runs to 358 residues: GTPase Obg (358 aa).

Residues 1-158 enclose the Obg domain; the sequence is MFVDNVDIYV…RHVRLELKLI (158 aa). The 197-residue stretch at 159-355 folds into the OBG-type G domain; sequence ADVGLVGFPN…LKYLLHESVR (197 aa). Residues 165–172, 190–194, 212–215, 280–283, and 336–338 each bind GTP; these read GFPNVGKS, FTTLI, DIPG, SKVD, and SSA. Mg(2+)-binding residues include S172 and T192.

It belongs to the TRAFAC class OBG-HflX-like GTPase superfamily. OBG GTPase family. As to quaternary structure, monomer. The cofactor is Mg(2+).

It is found in the cytoplasm. Its function is as follows. An essential GTPase which binds GTP, GDP and possibly (p)ppGpp with moderate affinity, with high nucleotide exchange rates and a fairly low GTP hydrolysis rate. Plays a role in control of the cell cycle, stress response, ribosome biogenesis and in those bacteria that undergo differentiation, in morphogenesis control. The chain is GTPase Obg from Wolinella succinogenes (strain ATCC 29543 / DSM 1740 / CCUG 13145 / JCM 31913 / LMG 7466 / NCTC 11488 / FDC 602W) (Vibrio succinogenes).